The primary structure comprises 433 residues: C2H2 type master regulator of conidiophore development brlA (433 aa).

3 disordered regions span residues 24–49, 240–269, and 286–306; these read SDCP…LYSQ, KSHT…ISGH, and MMQR…LRSN. Low complexity predominate over residues 30-49; it reads TSSFSPLDSPTPTPTSLYSQ. The span at 240-264 shows a compositional bias: polar residues; the sequence is KSHTPSTPHRSVSMGTPSGSDTPVS. Residues 288–302 show a composition bias toward basic residues; it reads QRHRQPSRKPSKKQL. 2 C2H2-type zinc fingers span residues 321–345 and 351–376; these read FKCK…MKSH and HVCW…TKTH. The interval 391–423 is disordered; it reads ETSQDFDPDFRGQLTPDGRPIYGSKLEDSMPDC.

It is found in the nucleus. In terms of biological role, brlA, abaA and wetA are pivotal regulators of conidiophore development and conidium maturation. They act individually and together to regulate their own expression and that of numerous other sporulation-specific genes. Binds promoters of target genes at brlA response elements (BREs) containing the conserved sequence 5'-(C/A)(A/G)AGGG(G/A)-3'. Regulates genes involved in conidiogenesis. This chain is C2H2 type master regulator of conidiophore development brlA, found in Penicillium digitatum (strain PHI26 / CECT 20796) (Green mold).